Here is a 292-residue protein sequence, read N- to C-terminus: 4-hydroxy-tetrahydrodipicolinate synthase (292 aa).

A pyruvate-binding site is contributed by Thr45. The Proton donor/acceptor role is filled by Tyr133. Catalysis depends on Lys161, which acts as the Schiff-base intermediate with substrate. Position 203 (Ile203) interacts with pyruvate.

This sequence belongs to the DapA family. Homotetramer; dimer of dimers.

It is found in the cytoplasm. The enzyme catalyses L-aspartate 4-semialdehyde + pyruvate = (2S,4S)-4-hydroxy-2,3,4,5-tetrahydrodipicolinate + H2O + H(+). Its pathway is amino-acid biosynthesis; L-lysine biosynthesis via DAP pathway; (S)-tetrahydrodipicolinate from L-aspartate: step 3/4. Catalyzes the condensation of (S)-aspartate-beta-semialdehyde [(S)-ASA] and pyruvate to 4-hydroxy-tetrahydrodipicolinate (HTPA). This is 4-hydroxy-tetrahydrodipicolinate synthase from Salmonella typhi.